A 255-amino-acid chain; its full sequence is tRNA (guanine-N(1)-)-methyltransferase (255 aa).

S-adenosyl-L-methionine is bound by residues Gly-112 and 131-136 (LGDYVL).

Belongs to the RNA methyltransferase TrmD family. As to quaternary structure, homodimer.

It is found in the cytoplasm. The enzyme catalyses guanosine(37) in tRNA + S-adenosyl-L-methionine = N(1)-methylguanosine(37) in tRNA + S-adenosyl-L-homocysteine + H(+). Functionally, specifically methylates guanosine-37 in various tRNAs. This is tRNA (guanine-N(1)-)-methyltransferase from Lacticaseibacillus paracasei (strain ATCC 334 / BCRC 17002 / CCUG 31169 / CIP 107868 / KCTC 3260 / NRRL B-441) (Lactobacillus paracasei).